Reading from the N-terminus, the 284-residue chain is Bifunctional protein FolD (284 aa).

NADP(+) contacts are provided by residues 163–165 (GRS), serine 188, and isoleucine 229.

Belongs to the tetrahydrofolate dehydrogenase/cyclohydrolase family. Homodimer.

The enzyme catalyses (6R)-5,10-methylene-5,6,7,8-tetrahydrofolate + NADP(+) = (6R)-5,10-methenyltetrahydrofolate + NADPH. The catalysed reaction is (6R)-5,10-methenyltetrahydrofolate + H2O = (6R)-10-formyltetrahydrofolate + H(+). Its pathway is one-carbon metabolism; tetrahydrofolate interconversion. Catalyzes the oxidation of 5,10-methylenetetrahydrofolate to 5,10-methenyltetrahydrofolate and then the hydrolysis of 5,10-methenyltetrahydrofolate to 10-formyltetrahydrofolate. In Campylobacter hominis (strain ATCC BAA-381 / DSM 21671 / CCUG 45161 / LMG 19568 / NCTC 13146 / CH001A), this protein is Bifunctional protein FolD.